The primary structure comprises 513 residues: Zinc finger CCCH-type with G patch domain-containing protein (513 aa).

The C3H1-type zinc finger occupies 155–178 (PCSYYLEGECRFDEAKCRFSHGAL). 2 stretches are compositionally biased toward acidic residues: residues 252–261 (DQDEDDELSS) and 273–283 (SDEAESDMDDL). The disordered stretch occupies residues 252 to 283 (DQDEDDELSSEESTSSMRDASSDEAESDMDDL). One can recognise a G-patch domain in the interval 312–358 (TRGIGSKLMEKMGYIHGTGLGSDGRGIVTPVSAQILPQGRSLDACME). A compositionally biased stretch (polar residues) spans 477-495 (QVQMQSHKQELATLQAQER). The disordered stretch occupies residues 477 to 513 (QVQMQSHKQELATLQAQERSLSKEQQTRKSKNKMFEF). Basic and acidic residues predominate over residues 496 to 513 (SLSKEQQTRKSKNKMFEF).

The protein localises to the nucleus. Transcription repressor. This Drosophila simulans (Fruit fly) protein is Zinc finger CCCH-type with G patch domain-containing protein.